A 37-amino-acid chain; its full sequence is Large ribosomal subunit protein bL36 (37 aa).

This sequence belongs to the bacterial ribosomal protein bL36 family.

The polypeptide is Large ribosomal subunit protein bL36 (Photobacterium profundum (strain SS9)).